The chain runs to 63 residues: ATP synthase F(0) complex subunit 8 (63 aa).

A helical membrane pass occupies residues 8–24 (TWLLTILSMLLTLFVLF). Lys-57 bears the N6-acetyllysine mark.

It belongs to the ATPase protein 8 family. In terms of assembly, component of the ATP synthase complex composed at least of ATP5F1A/subunit alpha, ATP5F1B/subunit beta, ATP5MC1/subunit c (homooctomer), MT-ATP6/subunit a, MT-ATP8/subunit 8, ATP5ME/subunit e, ATP5MF/subunit f, ATP5MG/subunit g, ATP5MK/subunit k, ATP5MJ/subunit j, ATP5F1C/subunit gamma, ATP5F1D/subunit delta, ATP5F1E/subunit epsilon, ATP5PF/subunit F6, ATP5PB/subunit b, ATP5PD/subunit d, ATP5PO/subunit OSCP. ATP synthase complex consists of a soluble F(1) head domain (subunits alpha(3) and beta(3)) - the catalytic core - and a membrane F(0) domain - the membrane proton channel (subunits c, a, 8, e, f, g, k and j). These two domains are linked by a central stalk (subunits gamma, delta, and epsilon) rotating inside the F1 region and a stationary peripheral stalk (subunits F6, b, d, and OSCP). Interacts with PRICKLE3.

It localises to the mitochondrion membrane. Functionally, subunit 8, of the mitochondrial membrane ATP synthase complex (F(1)F(0) ATP synthase or Complex V) that produces ATP from ADP in the presence of a proton gradient across the membrane which is generated by electron transport complexes of the respiratory chain. ATP synthase complex consist of a soluble F(1) head domain - the catalytic core - and a membrane F(1) domain - the membrane proton channel. These two domains are linked by a central stalk rotating inside the F(1) region and a stationary peripheral stalk. During catalysis, ATP synthesis in the catalytic domain of F(1) is coupled via a rotary mechanism of the central stalk subunits to proton translocation. In vivo, can only synthesize ATP although its ATP hydrolase activity can be activated artificially in vitro. Part of the complex F(0) domain. The protein is ATP synthase F(0) complex subunit 8 of Balaenoptera musculus (Blue whale).